Consider the following 338-residue polypeptide: Nickel transporter NixA (338 aa).

8 helical membrane passes run 11-31 (WLPY…FLWI), 37-57 (HILF…AFDA), 79-99 (GVGF…AVFL), 127-147 (FFLV…INLF), 187-207 (VLPL…IALL), 217-237 (AISF…MSLL), 266-286 (ITAI…LQIL), and 307-327 (YLGY…SLIW).

This sequence belongs to the NiCoT transporter (TC 2.A.52) family.

It is found in the cell membrane. Its function is as follows. Secondary nickel transporter. Required for full urease activity. This is Nickel transporter NixA from Staphylococcus aureus (strain NCTC 8325 / PS 47).